The sequence spans 225 residues: 2-phytyl-1,4-naphtoquinone methyltransferase (225 aa).

The protein belongs to the class I-like SAM-binding methyltransferase superfamily. MenG/UbiE family.

It carries out the reaction demethylphylloquinol + S-adenosyl-L-methionine = phylloquinol + S-adenosyl-L-homocysteine + H(+). It participates in cofactor biosynthesis; phylloquinone biosynthesis. Functionally, methyltransferase required for the conversion of 2-phytyl-1,4-beta-naphthoquinol to phylloquinol. The polypeptide is 2-phytyl-1,4-naphtoquinone methyltransferase (Thermosynechococcus vestitus (strain NIES-2133 / IAM M-273 / BP-1)).